A 391-amino-acid polypeptide reads, in one-letter code: Formate-dependent phosphoribosylglycinamide formyltransferase (391 aa).

N(1)-(5-phospho-beta-D-ribosyl)glycinamide is bound by residues 18 to 19 (EL) and E78. ATP is bound by residues R110, K151, 156 to 161 (SSGKGQ), 191 to 194 (EEFI), and E199. An ATP-grasp domain is found at 115–305 (ELAHEELGIR…EFELHLRAIL (191 aa)). Mg(2+)-binding residues include E264 and E276. Residues D283, K353, and 360 to 361 (RR) contribute to the N(1)-(5-phospho-beta-D-ribosyl)glycinamide site.

This sequence belongs to the PurK/PurT family. As to quaternary structure, homodimer.

It catalyses the reaction N(1)-(5-phospho-beta-D-ribosyl)glycinamide + formate + ATP = N(2)-formyl-N(1)-(5-phospho-beta-D-ribosyl)glycinamide + ADP + phosphate + H(+). The protein operates within purine metabolism; IMP biosynthesis via de novo pathway; N(2)-formyl-N(1)-(5-phospho-D-ribosyl)glycinamide from N(1)-(5-phospho-D-ribosyl)glycinamide (formate route): step 1/1. Involved in the de novo purine biosynthesis. Catalyzes the transfer of formate to 5-phospho-ribosyl-glycinamide (GAR), producing 5-phospho-ribosyl-N-formylglycinamide (FGAR). Formate is provided by PurU via hydrolysis of 10-formyl-tetrahydrofolate. This is Formate-dependent phosphoribosylglycinamide formyltransferase from Trichormus variabilis (strain ATCC 29413 / PCC 7937) (Anabaena variabilis).